Consider the following 306-residue polypeptide: Pantothenate synthetase (306 aa).

Residue 37-44 (MGALHEGH) participates in ATP binding. His-44 (proton donor) is an active-site residue. Gln-69 contacts (R)-pantoate. Gln-69 provides a ligand contact to beta-alanine. 155 to 158 (GEKD) is a binding site for ATP. Gln-161 is a binding site for (R)-pantoate. ATP-binding positions include Val-184 and 192-195 (KSSR).

The protein belongs to the pantothenate synthetase family. Homodimer.

Its subcellular location is the cytoplasm. The enzyme catalyses (R)-pantoate + beta-alanine + ATP = (R)-pantothenate + AMP + diphosphate + H(+). It participates in cofactor biosynthesis; (R)-pantothenate biosynthesis; (R)-pantothenate from (R)-pantoate and beta-alanine: step 1/1. Its function is as follows. Catalyzes the condensation of pantoate with beta-alanine in an ATP-dependent reaction via a pantoyl-adenylate intermediate. This chain is Pantothenate synthetase, found in Corynebacterium jeikeium (strain K411).